The primary structure comprises 459 residues: Cysteine--tRNA ligase (459 aa).

Cys28 provides a ligand contact to Zn(2+). The 'HIGH' region motif lies at 30-40 (ITIYDLCHIGH). Zn(2+) is bound by residues Cys209, His234, and Glu238. A 'KMSKS' region motif is present at residues 266–270 (KMSKS). Lys269 is an ATP binding site.

This sequence belongs to the class-I aminoacyl-tRNA synthetase family. In terms of assembly, monomer. It depends on Zn(2+) as a cofactor.

It is found in the cytoplasm. It carries out the reaction tRNA(Cys) + L-cysteine + ATP = L-cysteinyl-tRNA(Cys) + AMP + diphosphate. The sequence is that of Cysteine--tRNA ligase from Shewanella sediminis (strain HAW-EB3).